A 1247-amino-acid polypeptide reads, in one-letter code: Structural polyprotein (1247 aa).

The host transcription inhibition stretch occupies residues 36-67; the sequence is RPAGQLAQLISAVSRLALRTVPQKPRRTRKIK. The disordered stretch occupies residues 54-103; that stretch reads RTVPQKPRRTRKIKKQKQVKQEQQSTTNQKKKAPKQKQTQKKKRPGRRER. Basic residues-rich tracts occupy residues 59 to 71 and 82 to 100; these read KPRR…KQKQ and QKKK…RPGR. The Nuclear localization signal signature appears at 60 to 98; that stretch reads PRRTRKIKKQKQVKQEQQSTTNQKKKAPKQKQTQKKKRP. The binding to the viral RNA stretch occupies residues 83 to 113; sequence KKKAPKQKQTQKKKRPGRRERMCMKIENDCI. The tract at residues 98-112 is ribosome-binding; it reads PGRRERMCMKIENDC. An intrachain disulfide couples Cys-112 to Cys-127. Positions 112–260 constitute a Peptidase S3 domain; sequence CIFEVRHEGK…KITPEGSVEW (149 aa). His-138 acts as the Charge relay system in catalysis. The Nuclear export signal motif lies at 143–153; it reads IDNADLAKLAF. Residues 154–159 form an interaction with spike glycoprotein E2 region; sequence KRSSKY. Asp-160 (charge relay system) is an active-site residue. Positions 182–192 are dimerization of the capsid protein; the sequence is PEGYYNWHHGA. Catalysis depends on Ser-212, which acts as the Charge relay system. The tract at residues 218 to 222 is dimerization of the capsid protein; sequence DNKGR. Residues 261 to 273 are functions as an uncleaved signal peptide for the precursor of protein E3/E2; it reads SLALPVMCLLANT. 9 disulfide bridges follow: Cys-268–Cys-277, Cys-282–Cys-286, Cys-285–Cys-317, Cys-343–Cys-449, Cys-346–Cys-352, Cys-415–Cys-429, Cys-477–Cys-590, Cys-525–Cys-549, and Cys-527–Cys-544. Asn-272 is a glycosylation site (N-linked (GlcNAc...) asparagine; by host). N-linked (GlcNAc...) asparagine; by host glycans are attached at residues Asn-587 and Asn-669. Residues 692-712 traverse the membrane as a helical segment; sequence IAVLAAASIVITSLVGLSLGM. Residues 715–719 form an interaction with the capsid protein region; sequence CARRR. S-palmitoyl cysteine; by host attachment occurs at residues Cys-720, Cys-740, and Cys-741. Residues 720–740 traverse the membrane as a helical segment; the sequence is CITPYELTPGATIPFLLGVLC. The transient transmembrane before p62-6K protein processing stretch occupies residues 720 to 740; the sequence is CITPYELTPGATIPFLLGVLC. The cysteines at positions 720 and 741 are disulfide-linked. A helical membrane pass occupies residues 763–783; sequence PLFWLQLLIPLSAAIVVCNCL. 4 cysteine pairs are disulfide-bonded: Cys-857–Cys-922, Cys-870–Cys-902, Cys-871–Cys-904, and Cys-876–Cys-886. Residues 892–909 are E1 fusion peptide loop; that stretch reads VYPFMWGGAYCFCDAENT. 2 N-linked (GlcNAc...) asparagine; by host glycosylation sites follow: Asn-949 and Asn-1078. 4 disulfides stabilise this stretch: Cys-1067–Cys-1079, Cys-1109–Cys-1184, Cys-1114–Cys-1188, and Cys-1136–Cys-1178. The chain crosses the membrane as a helical span at residues 1224–1244; the sequence is GVGLVVAIAALILIIVLCVSF. Cys-1241 carries S-palmitoyl cysteine; by host lipidation. Cys-1241 carries the S-stearoyl cysteine; by host lipid modification.

In terms of assembly, homodimer. Homomultimer. Interacts with host karyopherin KPNA4; this interaction allows the nuclear import of the viral capsid protein. Interacts with spike glycoprotein E2. Interacts with host IRAK1; the interaction leads to inhibition of IRAK1-dependent signaling. As to quaternary structure, the precursor of protein E3/E2 and E1 form a heterodimer shortly after synthesis. The precursor of protein E3/E2 and E1 form a heterodimer shortly after synthesis. Processing of the precursor of protein E3/E2 into E2 and E3 results in a heterodimer of the spike glycoproteins E2 and E1. Spike at virion surface are constituted of three E2-E1 heterodimers. After target cell attachment and endocytosis, E1 change conformation to form homotrimers. Interacts with 6K protein. In terms of assembly, interacts with spike glycoprotein E1. Processing of the precursor of protein E3/E2 into E2 and E3 results in a heterodimer of the spike glycoproteins E2 and E1. Spike at virion surface are constituted of a trimer of E2-E1 heterodimers. Interacts with 6K protein. Interacts with host MXRA8; this interaction mediates virus entry. As to quaternary structure, oligomer. Interacts with spike glycoprotein E1. Interacts with spike glycoprotein E2. In terms of processing, structural polyprotein: Specific enzymatic cleavages in vivo yield mature proteins. Capsid protein is auto-cleaved during polyprotein translation, unmasking a signal peptide at the N-terminus of the precursor of E3/E2. The remaining polyprotein is then targeted to the host endoplasmic reticulum, where host signal peptidase cleaves it into pE2, 6K and E1 proteins. pE2 is further processed to mature E3 and E2 by host furin in trans-Golgi vesicle. Post-translationally, palmitoylated via thioester bonds. These palmitoylations may induce disruption of the C-terminus transmembrane. This would result in the reorientation of E2 C-terminus from lumenal to cytoplasmic side. N-glycosylated. In terms of processing, palmitoylated via thioester bonds.

It is found in the virion. It localises to the host cytoplasm. Its subcellular location is the host cell membrane. The protein resides in the host nucleus. The protein localises to the virion membrane. It is found in the host Golgi apparatus. It localises to the host trans-Golgi network. Its subcellular location is the host endoplasmic reticulum. It carries out the reaction Autocatalytic release of the core protein from the N-terminus of the togavirus structural polyprotein by hydrolysis of a -Trp-|-Ser- bond.. Functionally, forms an icosahedral capsid with a T=4 symmetry composed of 240 copies of the capsid protein surrounded by a lipid membrane through which penetrate 80 spikes composed of trimers of E1-E2 heterodimers. The capsid protein binds to the viral RNA genome at a site adjacent to a ribosome binding site for viral genome translation following genome release. Possesses a protease activity that results in its autocatalytic cleavage from the nascent structural protein. Following its self-cleavage, the capsid protein transiently associates with ribosomes, and within several minutes the protein binds to viral RNA and rapidly assembles into icosahedric core particles. The resulting nucleocapsid eventually associates with the cytoplasmic domain of the spike glycoprotein E2 at the cell membrane, leading to budding and formation of mature virions. In case of infection, new virions attach to target cells and after clathrin-mediated endocytosis their membrane fuses with the host endosomal membrane. This leads to the release of the nucleocapsid into the cytoplasm, followed by an uncoating event necessary for the genomic RNA to become accessible. The uncoating might be triggered by the interaction of capsid proteins with ribosomes. Binding of ribosomes would release the genomic RNA since the same region is genomic RNA-binding and ribosome-binding. Specifically inhibits interleukin-1 receptor-associated kinase 1/IRAK1-dependent signaling during viral entry, representing a means by which the alphaviruses may evade innate immune detection and activation prior to viral gene expression. Provides the signal sequence for the translocation of the precursor of protein E3/E2 to the host endoplasmic reticulum. Furin-cleaved E3 remains associated with spike glycoprotein E1 and mediates pH protection of the latter during the transport via the secretory pathway. After virion release from the host cell, the assembly protein E3 is gradually released in the extracellular space. In terms of biological role, plays a role in viral attachment to target host cell, by binding to the cell receptor MXRA8. Synthesized as a p62 precursor which is processed by furin at the cell membrane just before virion budding, giving rise to E2-E1 heterodimer. The p62-E1 heterodimer is stable, whereas E2-E1 is unstable and dissociate at low pH. p62 is processed at the last step, presumably to avoid E1 fusion activation before its final export to cell surface. E2 C-terminus contains a transitory transmembrane that would be disrupted by palmitoylation, resulting in reorientation of the C-terminal tail from lumenal to cytoplasmic side. This step is critical since E2 C-terminus is involved in budding by interacting with capsid proteins. This release of E2 C-terminus in cytoplasm occurs lately in protein export, and precludes premature assembly of particles at the endoplasmic reticulum membrane. Its function is as follows. Acts as a viroporin that participates in virus glycoprotein processing and transport to the plasma membrane, cell permeabilization and budding of viral particles. Disrupts the calcium homeostasis of the cell, probably at the endoplasmic reticulum level. This leads to cytoplasmic calcium elevation. Because of its lipophilic properties, the 6K protein is postulated to influence the selection of lipids that interact with the transmembrane domains of the glycoproteins, which, in turn, affects the deformability of the bilayer required for the extreme curvature that occurs as budding proceeds. Present in low amount in virions, about 3% compared to viral glycoproteins. Functionally, class II viral fusion protein. Fusion activity is inactive as long as E1 is bound to E2 in mature virion. After virus attachment to target cell via host MXRA8 and endocytosis, acidification of the endosome induce dissociation of E1/E2 heterodimer and concomitant trimerization of the E1 subunits. This E1 trimer is fusion active, and promotes release of viral nucleocapsid in cytoplasm after endosome and viral membrane fusion. Efficient fusion requires the presence of cholesterol and sphingolipid in the target membrane. The chain is Structural polyprotein from O'nyong-nyong virus (strain Gulu) (ONNV).